The sequence spans 129 residues: MGSNVSSVHDVHSSMEITSNGFVVEIESRRQWKSLFDSMKGSNKLLVIDFTAVWCGPCKAMEPRVREIASKYSEAVFARVDVDRLMDVAGTYRAITLPAFVFVKRGEEIDRVVGAKPDELVKKIEQHRV.

The region spanning 6 to 129 (SSVHDVHSSM…LVKKIEQHRV (124 aa)) is the Thioredoxin domain. Catalysis depends on nucleophile residues Cys55 and Cys58. Residues Cys55 and Cys58 are joined by a disulfide bond.

This sequence belongs to the thioredoxin family. Plant H-type subfamily.

The protein localises to the cytoplasm. Probable thiol-disulfide oxidoreductase that may be involved in the redox regulation of a number of cytosolic enzymes. This Arabidopsis thaliana (Mouse-ear cress) protein is Thioredoxin H7 (TRX7).